Reading from the N-terminus, the 542-residue chain is GMP synthase [glutamine-hydrolyzing] (542 aa).

A Glutamine amidotransferase type-1 domain is found at 28 to 218 (IIVILDFGSQ…VYHICHCEPT (191 aa)). Cysteine 105 serves as the catalytic Nucleophile. Catalysis depends on residues histidine 192 and glutamate 194. The GMPS ATP-PPase domain maps to 219-417 (WTTAAFIEES…IGLPEEIVRR (199 aa)). 246–252 (SGGVDSS) lines the ATP pocket.

In terms of assembly, homodimer.

The catalysed reaction is XMP + L-glutamine + ATP + H2O = GMP + L-glutamate + AMP + diphosphate + 2 H(+). The protein operates within purine metabolism; GMP biosynthesis; GMP from XMP (L-Gln route): step 1/1. Functionally, catalyzes the synthesis of GMP from XMP. This chain is GMP synthase [glutamine-hydrolyzing] (guaA), found in Synechocystis sp. (strain ATCC 27184 / PCC 6803 / Kazusa).